A 424-amino-acid polypeptide reads, in one-letter code: UDP-N-acetylglucosamine 1-carboxyvinyltransferase (424 aa).

Residue 22-23 (KN) participates in phosphoenolpyruvate binding. Arg93 lines the UDP-N-acetyl-alpha-D-glucosamine pocket. The active-site Proton donor is the Cys117. Cys117 carries the 2-(S-cysteinyl)pyruvic acid O-phosphothioketal modification. Residues 162 to 165 (KVSV), Asp307, and Ile329 each bind UDP-N-acetyl-alpha-D-glucosamine.

It belongs to the EPSP synthase family. MurA subfamily.

It localises to the cytoplasm. The enzyme catalyses phosphoenolpyruvate + UDP-N-acetyl-alpha-D-glucosamine = UDP-N-acetyl-3-O-(1-carboxyvinyl)-alpha-D-glucosamine + phosphate. Its pathway is cell wall biogenesis; peptidoglycan biosynthesis. Its function is as follows. Cell wall formation. Adds enolpyruvyl to UDP-N-acetylglucosamine. The sequence is that of UDP-N-acetylglucosamine 1-carboxyvinyltransferase from Actinobacillus pleuropneumoniae serotype 7 (strain AP76).